A 530-amino-acid polypeptide reads, in one-letter code: MSSLGDQRPAAGEQPGARLHVRATGGALLLCLLAVLLGWVWLRRQRACGIPPGPKPRPLVGNFGHLLVPRFLRPQFWLGSGSQTDTVGQHVYLARMARVYGNIFSFFIGHRLVVVLSDFHSVREALVQQAEVFSDRPRMPLISIMTKEKGIVFAHYGPIWKQQRRFSHSTLRHFGLGKLSLEPRIIEEFAYVKEAMQKHGEAPFSPFPIISNAVSNIICSLCFGQRFDYTNKEFKKVLDFMSRGLEICLHSQLFLINICPWFYYLPFGPFKELRQIERDISCFLKNIIREHQESLDASNPQDFIDMYLLHMEEEQGASRRSSFDEDYLFYIIGDLFIAGTDTTTNSLLWCLLYMSLNPDVQKKVHEEIERVIGCDRAPSLTDKAQMPYTEATIMEVQRLSMVVPLAIPHMTSEKTVLQGFTIPKGTVVLINLWSVHRDPAIWEKPDDFCPHRFLDDQGQLLKRETFIPFGIGKRVCMGEQLAKMELFLMFVSLMQTFTFALPEGSEKPVMTGRFGLTLAPHPFNVTISKR.

4 helical membrane passes run 21-41, 99-119, 247-267, and 328-348; these read VRATGGALLLCLLAVLLGWVW, VYGNIFSFFIGHRLVVVLSDF, ICLHSQLFLINICPWFYYLPF, and LFYIIGDLFIAGTDTTTNSLL. Cys476 is a binding site for heme. The chain crosses the membrane as a helical span at residues 481 to 501; the sequence is LAKMELFLMFVSLMQTFTFAL.

Belongs to the cytochrome P450 family. Heme serves as cofactor. As to expression, widely expressed. Expressed in heart, brain and liver.

It is found in the endoplasmic reticulum membrane. The protein resides in the microsome membrane. Its subcellular location is the mitochondrion inner membrane. It carries out the reaction an omega-methyl-long-chain fatty acid + reduced [NADPH--hemoprotein reductase] + O2 = an omega-hydroxy-long-chain fatty acid + oxidized [NADPH--hemoprotein reductase] + H2O + H(+). It catalyses the reaction (5Z,8Z,11Z,14Z)-eicosatetraenoate + reduced [NADPH--hemoprotein reductase] + O2 = 19-hydroxy-(5Z,8Z,11Z,14Z)-eicosatetraenoate + oxidized [NADPH--hemoprotein reductase] + H2O + H(+). The catalysed reaction is (5Z,8Z,11Z,14Z)-eicosatetraenoate + reduced [NADPH--hemoprotein reductase] + O2 = 20-hydroxy-(5Z,8Z,11Z,14Z)-eicosatetraenoate + oxidized [NADPH--hemoprotein reductase] + H2O + H(+). The enzyme catalyses N-[(5Z,8Z,11Z,14Z)-eicosatetraenoyl]-serotonin + reduced [NADPH--hemoprotein reductase] + O2 = 2-oxo-N-[(5Z,8Z,11Z,14Z)-eicosatetraenoyl]-serotonin + oxidized [NADPH--hemoprotein reductase] + H2O + H(+). Functionally, a cytochrome P450 monooxygenase involved in the metabolism of arachidonic acid and its conjugates. Mechanistically, uses molecular oxygen inserting one oxygen atom into a substrate, and reducing the second into a water molecule, with two electrons provided by NADPH via cytochrome P450 reductase (CPR; NADPH-ferrihemoprotein reductase). Acts as an omega and omega-1 hydroxylase for arachidonic acid and possibly for other long chain fatty acids. May modulate the arachidonic acid signaling pathway and play a role in other fatty acid signaling processes. May down-regulate the biological activities of N-arachidonoyl-serotonin, an endocannabinoid that has anti-nociceptive effects through inhibition of fatty acid amide hydrolase FAAH, TRPV1 receptor and T-type calcium channels. Catalyzes C-2 oxidation of the indole ring of N-arachidonoyl-serotonin forming a less active product 2-oxo-N-arachidonoyl-serotonin. This chain is Cytochrome P450 2U1, found in Mus musculus (Mouse).